A 418-amino-acid chain; its full sequence is Glutamyl-tRNA reductase (418 aa).

Substrate-binding positions include 49–52 (TCNR), Ser109, 114–116 (EPQ), and Gln120. Catalysis depends on Cys50, which acts as the Nucleophile. 189–194 (GAGETI) serves as a coordination point for NADP(+).

Belongs to the glutamyl-tRNA reductase family. Homodimer.

The enzyme catalyses (S)-4-amino-5-oxopentanoate + tRNA(Glu) + NADP(+) = L-glutamyl-tRNA(Glu) + NADPH + H(+). It participates in porphyrin-containing compound metabolism; protoporphyrin-IX biosynthesis; 5-aminolevulinate from L-glutamyl-tRNA(Glu): step 1/2. Functionally, catalyzes the NADPH-dependent reduction of glutamyl-tRNA(Glu) to glutamate 1-semialdehyde (GSA). This Escherichia coli O45:K1 (strain S88 / ExPEC) protein is Glutamyl-tRNA reductase.